Here is a 118-residue protein sequence, read N- to C-terminus: Small ribosomal subunit protein uS13 (118 aa).

Positions 94-118 are disordered; sequence GLPLRGQRTRTNARTRKGPRKAIRK.

It belongs to the universal ribosomal protein uS13 family. As to quaternary structure, part of the 30S ribosomal subunit. Forms a loose heterodimer with protein S19. Forms two bridges to the 50S subunit in the 70S ribosome.

Functionally, located at the top of the head of the 30S subunit, it contacts several helices of the 16S rRNA. In the 70S ribosome it contacts the 23S rRNA (bridge B1a) and protein L5 of the 50S subunit (bridge B1b), connecting the 2 subunits; these bridges are implicated in subunit movement. Contacts the tRNAs in the A and P-sites. This is Small ribosomal subunit protein uS13 from Xanthomonas axonopodis pv. citri (strain 306).